Reading from the N-terminus, the 549-residue chain is Teichoic acids export ATP-binding protein TagH (549 aa).

In terms of domain architecture, ABC transporter spans 22 to 243 (DKLKDLFRKQ…YRAFLKEYNQ (222 aa)). An ATP-binding site is contributed by 57–64 (GLNGSGKS). The tract at residues 244-549 (MSMEDRKKFQ…EIQSISIVKK (306 aa)) is unknown. The SH3b domain maps to 346–415 (ENMYMVKSNG…VSTKFIEPFK (70 aa)).

The protein belongs to the ABC transporter superfamily. Teichoic acids exporter (TC 3.A.1.104.1) family. In terms of assembly, the complex is composed of two ATP-binding proteins (TagH) and two transmembrane proteins (TagG).

Its subcellular location is the cell membrane. The enzyme catalyses ATP + H2O + teichoic acidSide 1 = ADP + phosphate + teichoic acidSide 2.. Part of the ABC transporter complex TagGH involved in teichoic acids export. Responsible for energy coupling to the transport system. In Bacillus cereus (strain ZK / E33L), this protein is Teichoic acids export ATP-binding protein TagH.